A 493-amino-acid polypeptide reads, in one-letter code: Glutamyl-tRNA(Gln) amidotransferase subunit A (493 aa).

Catalysis depends on charge relay system residues lysine 79 and serine 159. Catalysis depends on serine 183, which acts as the Acyl-ester intermediate.

It belongs to the amidase family. GatA subfamily. Heterotrimer of A, B and C subunits.

The catalysed reaction is L-glutamyl-tRNA(Gln) + L-glutamine + ATP + H2O = L-glutaminyl-tRNA(Gln) + L-glutamate + ADP + phosphate + H(+). Allows the formation of correctly charged Gln-tRNA(Gln) through the transamidation of misacylated Glu-tRNA(Gln) in organisms which lack glutaminyl-tRNA synthetase. The reaction takes place in the presence of glutamine and ATP through an activated gamma-phospho-Glu-tRNA(Gln). This is Glutamyl-tRNA(Gln) amidotransferase subunit A from Brucella abortus (strain S19).